A 54-amino-acid polypeptide reads, in one-letter code: Hemoglobin subunit omega (54 aa).

The Globin domain maps to 2–54; that stretch reads HWTAEEKQIILAIWAKIDIEEAGAAALSRLLVVYPWTQRYFKNFGNLSSPTAI.

Belongs to the globin family.

In terms of biological role, hemoglobin omega chain is an embryonic-type beta-type chain found in prenatal and neonatal marsupials. The polypeptide is Hemoglobin subunit omega (Notamacropus eugenii (Tammar wallaby)).